Here is a 174-residue protein sequence, read N- to C-terminus: Nucleoside diphosphate kinase (174 aa).

Residues K14, F62, R90, T96, and R107 each contribute to the ATP site. H123 acts as the Pros-phosphohistidine intermediate in catalysis.

The protein belongs to the NDK family. Mg(2+) serves as cofactor.

It is found in the cytoplasm. It catalyses the reaction a 2'-deoxyribonucleoside 5'-diphosphate + ATP = a 2'-deoxyribonucleoside 5'-triphosphate + ADP. The catalysed reaction is a ribonucleoside 5'-diphosphate + ATP = a ribonucleoside 5'-triphosphate + ADP. Major role in the synthesis of nucleoside triphosphates other than ATP. The ATP gamma phosphate is transferred to the NDP beta phosphate via a ping-pong mechanism, using a phosphorylated active-site intermediate. The chain is Nucleoside diphosphate kinase from Thermococcus kodakarensis (strain ATCC BAA-918 / JCM 12380 / KOD1) (Pyrococcus kodakaraensis (strain KOD1)).